The following is a 666-amino-acid chain: Mitogen-activated protein kinase kinase kinase ANP1 (666 aa).

The Protein kinase domain maps to 69 to 331; the sequence is WRKGQLIGRG…ASELLKHPFV (263 aa). ATP contacts are provided by residues 75–83 and Lys-98; that span reads IGRGAFGTV. The stretch at 101–131 forms a coiled coil; it reads LIAANFASKEKTQAHIQELEEEVKLLKNLSH. Glycyl lysine isopeptide (Lys-Gly) (interchain with G-Cter in ubiquitin) cross-links involve residues Lys-109 and Lys-111. The active-site Proton acceptor is the Asp-197. Residues 452–464 are compositionally biased toward basic and acidic residues; the sequence is KFDESPGNGEKES. Disordered regions lie at residues 452 to 481, 536 to 592, and 635 to 666; these read KFDE…DDDE, GFLK…DGVS, and QEIM…SPGK. Low complexity predominate over residues 538 to 558; that stretch reads LKLPPKSRSPSRGPLGGSPSR. Residues 560-569 are compositionally biased toward polar residues; it reads TDATSCSKSP. The stretch at 620-643 forms a coiled coil; the sequence is KKWKEELDQELERKRQEIMRQAGL. A compositionally biased stretch (basic and acidic residues) spans 647–660; the sequence is PRDRGMSRQREKSR.

The protein belongs to the protein kinase superfamily. STE Ser/Thr protein kinase family. MAP kinase kinase kinase subfamily. Expressed in roots, inflorescence stems, flower buds and flowers. Low amount in rosette and cauline leaves.

The catalysed reaction is L-seryl-[protein] + ATP = O-phospho-L-seryl-[protein] + ADP + H(+). It carries out the reaction L-threonyl-[protein] + ATP = O-phospho-L-threonyl-[protein] + ADP + H(+). Functionally, may be involved in an oxidative stress-mediated signaling cascade that phosphorylates downstream MAP kinases MPK3 and MPK6. May suppress auxin signaling that promotes cell cycle. Functionally redundant to ANP2 and ANP3 in the positive regulation of cytokinesis. This chain is Mitogen-activated protein kinase kinase kinase ANP1 (ANP1), found in Arabidopsis thaliana (Mouse-ear cress).